The chain runs to 270 residues: Putative hydro-lyase ACIAD2519 (270 aa).

The protein belongs to the D-glutamate cyclase family.

This Acinetobacter baylyi (strain ATCC 33305 / BD413 / ADP1) protein is Putative hydro-lyase ACIAD2519.